A 209-amino-acid polypeptide reads, in one-letter code: Pyridoxal phosphate homeostasis protein (209 aa).

Lysine 31 is modified (N6-(pyridoxal phosphate)lysine).

The protein belongs to the pyridoxal phosphate-binding protein YggS/PROSC family.

Functionally, pyridoxal 5'-phosphate (PLP)-binding protein, which is involved in PLP homeostasis. The chain is Pyridoxal phosphate homeostasis protein from Deinococcus radiodurans (strain ATCC 13939 / DSM 20539 / JCM 16871 / CCUG 27074 / LMG 4051 / NBRC 15346 / NCIMB 9279 / VKM B-1422 / R1).